The sequence spans 272 residues: Shikimate dehydrogenase (NADP(+)) (272 aa).

Shikimate is bound by residues Ser14–Ser16 and Thr61. The Proton acceptor role is filled by Lys65. Glu77 provides a ligand contact to NADP(+). The shikimate site is built by Asn86 and Asp102. Residues Gly126 to Ala130, Asn149 to Arg154, and Met213 each bind NADP(+). A shikimate-binding site is contributed by Tyr215. Gly237 contacts NADP(+).

Belongs to the shikimate dehydrogenase family. Homodimer.

The enzyme catalyses shikimate + NADP(+) = 3-dehydroshikimate + NADPH + H(+). Its pathway is metabolic intermediate biosynthesis; chorismate biosynthesis; chorismate from D-erythrose 4-phosphate and phosphoenolpyruvate: step 4/7. In terms of biological role, involved in the biosynthesis of the chorismate, which leads to the biosynthesis of aromatic amino acids. Catalyzes the reversible NADPH linked reduction of 3-dehydroshikimate (DHSA) to yield shikimate (SA). The sequence is that of Shikimate dehydrogenase (NADP(+)) from Sodalis glossinidius (strain morsitans).